A 385-amino-acid polypeptide reads, in one-letter code: Putative RNA methyltransferase YpsC (385 aa).

The region spanning 44-156 is the THUMP domain; it reads AICRANLWLR…KDQALITLDS (113 aa).

Belongs to the methyltransferase superfamily. In terms of assembly, interacts with the RNA polymerase core.

In Bacillus subtilis (strain 168), this protein is Putative RNA methyltransferase YpsC (ypsC).